Consider the following 133-residue polypeptide: UPF0102 protein Fnod_1509 (133 aa).

The protein belongs to the UPF0102 family.

In Fervidobacterium nodosum (strain ATCC 35602 / DSM 5306 / Rt17-B1), this protein is UPF0102 protein Fnod_1509.